A 379-amino-acid polypeptide reads, in one-letter code: Protein RecA (379 aa).

79 to 86 (GPESSGKT) contributes to the ATP binding site.

Belongs to the RecA family.

It is found in the cytoplasm. In terms of biological role, can catalyze the hydrolysis of ATP in the presence of single-stranded DNA, the ATP-dependent uptake of single-stranded DNA by duplex DNA, and the ATP-dependent hybridization of homologous single-stranded DNAs. It interacts with LexA causing its activation and leading to its autocatalytic cleavage. The polypeptide is Protein RecA (Streptococcus agalactiae).